We begin with the raw amino-acid sequence, 447 residues long: Ribosomal protein uS12 methylthiotransferase RimO (447 aa).

Residues 6–122 enclose the MTTase N-terminal domain; it reads EKVSMVSLGC…IAEIIEEKSS (117 aa). [4Fe-4S] cluster-binding residues include cysteine 15, cysteine 51, cysteine 85, cysteine 160, cysteine 164, and cysteine 167. The region spanning 146 to 376 is the Radical SAM core domain; sequence SSPAYTAYLK…MKAQARVSFK (231 aa). Residues 379 to 447 form the TRAM domain; that stretch reads RRLIDTEEQV…DYDLIGEIIS (69 aa).

Belongs to the methylthiotransferase family. RimO subfamily. The cofactor is [4Fe-4S] cluster.

Its subcellular location is the cytoplasm. It carries out the reaction L-aspartate(89)-[ribosomal protein uS12]-hydrogen + (sulfur carrier)-SH + AH2 + 2 S-adenosyl-L-methionine = 3-methylsulfanyl-L-aspartate(89)-[ribosomal protein uS12]-hydrogen + (sulfur carrier)-H + 5'-deoxyadenosine + L-methionine + A + S-adenosyl-L-homocysteine + 2 H(+). Functionally, catalyzes the methylthiolation of an aspartic acid residue of ribosomal protein uS12. The sequence is that of Ribosomal protein uS12 methylthiotransferase RimO from Geobacter sulfurreducens (strain ATCC 51573 / DSM 12127 / PCA).